The primary structure comprises 313 residues: Formimidoylglutamase (313 aa).

The Mn(2+) site is built by H130, D155, H157, D159, D241, and D243.

The protein belongs to the arginase family. It depends on Mn(2+) as a cofactor.

It carries out the reaction N-formimidoyl-L-glutamate + H2O = formamide + L-glutamate. Its pathway is amino-acid degradation; L-histidine degradation into L-glutamate; L-glutamate from N-formimidoyl-L-glutamate (hydrolase route): step 1/1. Its function is as follows. Catalyzes the conversion of N-formimidoyl-L-glutamate to L-glutamate and formamide. The sequence is that of Formimidoylglutamase from Salmonella arizonae (strain ATCC BAA-731 / CDC346-86 / RSK2980).